We begin with the raw amino-acid sequence, 216 residues long: Oligoribonuclease (216 aa).

One can recognise an Exonuclease domain in the interval 6 to 171 (VVWMDCEMTG…ADIKESIREL (166 aa)). The active site involves tyrosine 128.

This sequence belongs to the oligoribonuclease family.

The protein resides in the cytoplasm. 3'-to-5' exoribonuclease specific for small oligoribonucleotides. This is Oligoribonuclease from Nocardia farcinica (strain IFM 10152).